Here is a 914-residue protein sequence, read N- to C-terminus: Chlorate reductase subunit alpha (914 aa).

Residues 1-32 constitute a signal peptide (tat-type signal); that stretch reads MNSPDEHNGRRRFLQFSAAALASAAASPSLWA. The region spanning 62–125 is the 4Fe-4S Mo/W bis-MGD-type domain; sequence DSVGVMTHSN…VYCSWSKQPD (64 aa). Positions 69, 73, 77, and 111 each coordinate [4Fe-4S] cluster. Position 205 (D205) interacts with Mo-bis(molybdopterin guanine dinucleotide).

This sequence belongs to the prokaryotic molybdopterin-containing oxidoreductase family. Heterotrimer of alpha, beta and gamma subunits. Requires [4Fe-4S] cluster as cofactor. Mo-bis(molybdopterin guanine dinucleotide) is required as a cofactor. Post-translationally, predicted to be exported by the Tat system. The position of the signal peptide cleavage has not been experimentally proven.

It is found in the periplasm. The catalysed reaction is chlorate + AH2 = chlorite + A + H2O. Functionally, terminal reductase that allows anaerobic growth on chlorate as the sole respiratory oxidant. This is Chlorate reductase subunit alpha (clrA) from Ideonella dechloratans.